Consider the following 170-residue polypeptide: Large ribosomal subunit protein uL5 (170 aa).

It belongs to the universal ribosomal protein uL5 family. In terms of assembly, part of the 50S ribosomal subunit; contacts the 5S rRNA and probably tRNA. Forms a bridge to the 30S subunit in the 70S ribosome.

In terms of biological role, this is one of the proteins that bind and probably mediate the attachment of the 5S RNA into the large ribosomal subunit, where it forms part of the central protuberance. In the 70S ribosome it contacts protein S13 of the 30S subunit (bridge B1b), connecting the 2 subunits; this bridge is implicated in subunit movement. May contact the P site tRNA; the 5S rRNA and some of its associated proteins might help stabilize positioning of ribosome-bound tRNAs. In Methanobrevibacter smithii (strain ATCC 35061 / DSM 861 / OCM 144 / PS), this protein is Large ribosomal subunit protein uL5.